Consider the following 145-residue polypeptide: ATP synthase epsilon chain (145 aa).

The tract at residues 100 to 123 (RAQRAKQRAEDAIKTASEKHDSDE) is disordered. Over residues 106 to 123 (QRAEDAIKTASEKHDSDE) the composition is skewed to basic and acidic residues.

This sequence belongs to the ATPase epsilon chain family. As to quaternary structure, F-type ATPases have 2 components, CF(1) - the catalytic core - and CF(0) - the membrane proton channel. CF(1) has five subunits: alpha(3), beta(3), gamma(1), delta(1), epsilon(1). CF(0) has three main subunits: a, b and c.

The protein resides in the cell membrane. Its function is as follows. Produces ATP from ADP in the presence of a proton gradient across the membrane. The polypeptide is ATP synthase epsilon chain (Latilactobacillus sakei subsp. sakei (strain 23K) (Lactobacillus sakei subsp. sakei)).